A 173-amino-acid polypeptide reads, in one-letter code: Large ribosomal subunit protein uL16 (173 aa).

The protein belongs to the universal ribosomal protein uL16 family.

The sequence is that of Large ribosomal subunit protein uL16 from Methanosarcina mazei (strain ATCC BAA-159 / DSM 3647 / Goe1 / Go1 / JCM 11833 / OCM 88) (Methanosarcina frisia).